The primary structure comprises 449 residues: Tubulin beta-6 chain (449 aa).

GTP is bound by residues Q11, E69, S138, G142, T143, G144, N204, and N226. Residue E69 coordinates Mg(2+). The tract at residues 425 to 449 is disordered; it reads YQDATADDEGEYEEDEDEEEILDHE. Over residues 429–449 the composition is skewed to acidic residues; that stretch reads TADDEGEYEEDEDEEEILDHE.

This sequence belongs to the tubulin family. Dimer of alpha and beta chains. A typical microtubule is a hollow water-filled tube with an outer diameter of 25 nm and an inner diameter of 15 nM. Alpha-beta heterodimers associate head-to-tail to form protofilaments running lengthwise along the microtubule wall with the beta-tubulin subunit facing the microtubule plus end conferring a structural polarity. Microtubules usually have 13 protofilaments but different protofilament numbers can be found in some organisms and specialized cells. Requires Mg(2+) as cofactor.

The protein resides in the cytoplasm. It localises to the cytoskeleton. Functionally, tubulin is the major constituent of microtubules, a cylinder consisting of laterally associated linear protofilaments composed of alpha- and beta-tubulin heterodimers. Microtubules grow by the addition of GTP-tubulin dimers to the microtubule end, where a stabilizing cap forms. Below the cap, tubulin dimers are in GDP-bound state, owing to GTPase activity of alpha-tubulin. The polypeptide is Tubulin beta-6 chain (TUBB6) (Arabidopsis thaliana (Mouse-ear cress)).